Reading from the N-terminus, the 259-residue chain is Ras-related protein Rab-34 (259 aa).

M1 is modified (N-acetylmethionine). Positions 62, 63, 64, 65, 66, 78, 81, and 84 each coordinate GTP. T66 contacts Mg(2+). The short motif at 71-89 is the Switch 1 element; sequence RFCKDTFDKNYKATIGVDF. 2 residues coordinate Mg(2+): T84 and D107. Positions 108-127 match the Switch 2 motif; that stretch reads TAGQERFKCIASTYYRGAQA. The GTP site is built by G110, K167, D169, and S198. S241 carries the phosphoserine modification. Residues C257 and C258 are each lipidated (S-geranylgeranyl cysteine).

It belongs to the small GTPase superfamily. Rab family. Interacts with RILP. The GTP-bound form interacts with REP15. Mg(2+) is required as a cofactor.

The protein localises to the cytoplasm. The protein resides in the golgi apparatus. It localises to the cytoplasmic vesicle. It is found in the phagosome. Its subcellular location is the phagosome membrane. The protein localises to the cell projection. The protein resides in the cilium. It localises to the cytoskeleton. It is found in the microtubule organizing center. Its subcellular location is the centrosome. The protein localises to the centriole. It carries out the reaction GTP + H2O = GDP + phosphate + H(+). With respect to regulation, regulated by guanine nucleotide exchange factors (GEFs) which promote the exchange of bound GDP for free GTP. Regulated by GTPase activating proteins (GAPs) which increase the GTP hydrolysis activity. Inhibited by GDP dissociation inhibitors (GDIs). In terms of biological role, the small GTPases Rab are key regulators of intracellular membrane trafficking, from the formation of transport vesicles to their fusion with membranes. Rabs cycle between an inactive GDP-bound form and an active GTP-bound form that is able to recruit to membranes different sets of downstream effectors directly responsible for vesicle formation, movement, tethering and fusion. RAB34 transports protein involved in the redistribution of lysosomes to the peri-Golgi region. Plays a role in the maturation of phagosomes that engulf pathogens, such as S.aureus and M.tuberculosis. Plays a role in the fusion of phagosomes with lysosomes. Required for the early steps of intracellular ciliogenesis, the cilium assembly pathway initiated by trafficking and docking of ciliary vesicles to the centrioles in the cytoplasm, followed by axoneme formation in the cytoplasm. After axoneme elongation, the centrioles migrate close to the cell surface so that ciliary vesicles can fuse with the plasma membrane to expose cilia to the extracellular space. It seems dispensable for ciliogenesis via the extracellular pathway where cilium assembly begins after migration and docking of the centriole to the plasma membrane. Also acts as a positive regulator of hedgehog signaling and regulates ciliary function. In Mus musculus (Mouse), this protein is Ras-related protein Rab-34.